The following is a 487-amino-acid chain: Glutamyl-tRNA(Gln) amidotransferase subunit A (487 aa).

Catalysis depends on charge relay system residues Lys-79 and Ser-154. Residue Ser-178 is the Acyl-ester intermediate of the active site.

The protein belongs to the amidase family. GatA subfamily. In terms of assembly, heterotrimer of A, B and C subunits.

The enzyme catalyses L-glutamyl-tRNA(Gln) + L-glutamine + ATP + H2O = L-glutaminyl-tRNA(Gln) + L-glutamate + ADP + phosphate + H(+). In terms of biological role, allows the formation of correctly charged Gln-tRNA(Gln) through the transamidation of misacylated Glu-tRNA(Gln) in organisms which lack glutaminyl-tRNA synthetase. The reaction takes place in the presence of glutamine and ATP through an activated gamma-phospho-Glu-tRNA(Gln). The protein is Glutamyl-tRNA(Gln) amidotransferase subunit A of Moorella thermoacetica (strain ATCC 39073 / JCM 9320).